The sequence spans 329 residues: MLGSVTDFLKPRLVDIEQVSPTHAKVTLEPLERGFGHTLGNALRRILLSSMPGCAVTEVEIDGVLHEYSSKEGVQEDILEILLNLKGIAVKLEGKDEVTLSLTKSGTGPVTAGDITHGDEVEIVNPEHVICHLTGANAEISMRLKVQRGRGYVPASARVHNDDEERPIGRLLLDSAFSPIVRIAYNVEAARVEQRTDLDKLVIDMETNGTLDPEEAIRRSATILAEQLEAFVDLRDVSVPEKKEEKPEFDPILLRPVDDLELTVRSANCLKAEAIHYIGDLVQRTEVELLKTPNLGKKSLTEIKDVLASRGLSLGMRLENWPPASIADE.

The tract at residues 1–235 is alpha N-terminal domain (alpha-NTD); it reads MLGSVTDFLK…EQLEAFVDLR (235 aa). An alpha C-terminal domain (alpha-CTD) region spans residues 249–329; that stretch reads FDPILLRPVD…NWPPASIADE (81 aa).

This sequence belongs to the RNA polymerase alpha chain family. In terms of assembly, homodimer. The RNAP catalytic core consists of 2 alpha, 1 beta, 1 beta' and 1 omega subunit. When a sigma factor is associated with the core the holoenzyme is formed, which can initiate transcription.

It carries out the reaction RNA(n) + a ribonucleoside 5'-triphosphate = RNA(n+1) + diphosphate. Functionally, DNA-dependent RNA polymerase catalyzes the transcription of DNA into RNA using the four ribonucleoside triphosphates as substrates. In Aeromonas hydrophila subsp. hydrophila (strain ATCC 7966 / DSM 30187 / BCRC 13018 / CCUG 14551 / JCM 1027 / KCTC 2358 / NCIMB 9240 / NCTC 8049), this protein is DNA-directed RNA polymerase subunit alpha.